The primary structure comprises 1102 residues: Carbamoyl phosphate synthase large chain (1102 aa).

The tract at residues 1 to 408 is carboxyphosphate synthetic domain; that stretch reads MPKRTDIQSV…AFQKALRSLE (408 aa). ATP-binding residues include Arg-129, Arg-175, Gly-181, Gly-182, Glu-214, Ile-216, Glu-221, Gly-247, Val-248, His-249, Gln-291, and Glu-305. The 198-residue stretch at 137–334 folds into the ATP-grasp 1 domain; sequence EEVRKKIGHG…IAKIAAKLAV (198 aa). Mg(2+) is bound by residues Gln-291, Glu-305, and Asn-307. Residues Gln-291, Glu-305, and Asn-307 each contribute to the Mn(2+) site. The interval 409-551 is oligomerization domain; sequence KKGSQFTFVG…YFYSSYDEES (143 aa). Residues 552 to 954 form a carbamoyl phosphate synthetic domain region; it reads EVAPREKPAV…AYAKSQAGAY (403 aa). The 192-residue stretch at 682–873 folds into the ATP-grasp 2 domain; that stretch reads GRVLAEAGLP…LAKAAARISL (192 aa). Residues Arg-718, Arg-757, Leu-759, Glu-764, Gly-789, Ile-790, His-791, Ser-792, Gln-832, and Glu-844 each coordinate ATP. Positions 832, 844, and 846 each coordinate Mg(2+). Positions 832, 844, and 846 each coordinate Mn(2+). An MGS-like domain is found at 955–1100; the sequence is GPLPTKGRAF…QEHAAFLIAA (146 aa). An allosteric domain region spans residues 955–1102; the sequence is GPLPTKGRAF…HAAFLIAARD (148 aa).

Belongs to the CarB family. As to quaternary structure, composed of two chains; the small (or glutamine) chain promotes the hydrolysis of glutamine to ammonia, which is used by the large (or ammonia) chain to synthesize carbamoyl phosphate. Tetramer of heterodimers (alpha,beta)4. Mg(2+) is required as a cofactor. It depends on Mn(2+) as a cofactor.

It catalyses the reaction hydrogencarbonate + L-glutamine + 2 ATP + H2O = carbamoyl phosphate + L-glutamate + 2 ADP + phosphate + 2 H(+). It carries out the reaction hydrogencarbonate + NH4(+) + 2 ATP = carbamoyl phosphate + 2 ADP + phosphate + 2 H(+). The protein operates within amino-acid biosynthesis; L-arginine biosynthesis; carbamoyl phosphate from bicarbonate: step 1/1. Its pathway is pyrimidine metabolism; UMP biosynthesis via de novo pathway; (S)-dihydroorotate from bicarbonate: step 1/3. Its function is as follows. Large subunit of the glutamine-dependent carbamoyl phosphate synthetase (CPSase). CPSase catalyzes the formation of carbamoyl phosphate from the ammonia moiety of glutamine, carbonate, and phosphate donated by ATP, constituting the first step of 2 biosynthetic pathways, one leading to arginine and/or urea and the other to pyrimidine nucleotides. The large subunit (synthetase) binds the substrates ammonia (free or transferred from glutamine from the small subunit), hydrogencarbonate and ATP and carries out an ATP-coupled ligase reaction, activating hydrogencarbonate by forming carboxy phosphate which reacts with ammonia to form carbamoyl phosphate. The sequence is that of Carbamoyl phosphate synthase large chain from Streptomyces coelicolor (strain ATCC BAA-471 / A3(2) / M145).